We begin with the raw amino-acid sequence, 278 residues long: Envelope glycoprotein L (278 aa).

Residues 1-32 (MCRRPDCGFSFSPGPVILLWCCLLLSIVSSAA) form the signal peptide. In terms of domain architecture, gL betaherpesvirus-type spans 43–256 (VPAECPELTR…DKYYAGLPPE (214 aa)). An intrachain disulfide couples C154 to C159.

The protein belongs to the herpesviridae glycoprotein L (gL) family. Betaherpesvirinae gL subfamily. As to quaternary structure, interacts with glycoprotein H (gH); this interaction is necessary for the correct processing and cell surface expression of gH. Forms the envelope pentamer complex (PC) composed of gH, gL, UL128, UL130, and UL131A. The pentamer interacts with host NRP2. Forms the envelope trimer complex composed of gH, gL, and gO. The trimer interacts with host PDGFRA. The trimer also interacts with host EPHA2.

It localises to the virion membrane. It is found in the host cell membrane. The protein resides in the host Golgi apparatus. Its subcellular location is the host trans-Golgi network. Its function is as follows. The heterodimer glycoprotein H-glycoprotein L is required for the fusion of viral and plasma membranes leading to virus entry into the host cell. Acts as a functional inhibitor of gH and maintains gH in an inhibited form. Upon binding to host integrins, gL dissociates from gH leading to activation of the viral fusion glycoproteins gB and gH. In human cytomegalovirus, forms two distincts complexes to mediate viral entry, a trimer and a pentamer at the surface of the virion envelope. The gH-gL-gO trimer is required for infection in fibroblasts by interacting with host PDGFRA, and in glioblastoma cells by interacting with host EPHA2. The gH-gL-UL128-UL130-UL131A pentamer is essential for viral entry in epithelial, endothelial and myeloid cells via interaction with host NRP2. The sequence is that of Envelope glycoprotein L from Human cytomegalovirus (strain 119) (HHV-5).